The primary structure comprises 232 residues: Large ribosomal subunit protein uL1 (232 aa).

This sequence belongs to the universal ribosomal protein uL1 family. In terms of assembly, part of the 50S ribosomal subunit.

Binds directly to 23S rRNA. The L1 stalk is quite mobile in the ribosome, and is involved in E site tRNA release. Functionally, protein L1 is also a translational repressor protein, it controls the translation of the L11 operon by binding to its mRNA. This chain is Large ribosomal subunit protein uL1, found in Azobacteroides pseudotrichonymphae genomovar. CFP2.